Here is a 78-residue protein sequence, read N- to C-terminus: Large ribosomal subunit protein bL28 (78 aa).

The protein belongs to the bacterial ribosomal protein bL28 family.

The protein is Large ribosomal subunit protein bL28 of Clavibacter michiganensis subsp. michiganensis (strain NCPPB 382).